A 356-amino-acid chain; its full sequence is Phosphoribosylformylglycinamidine cyclo-ligase (356 aa).

Belongs to the AIR synthase family.

Its subcellular location is the cytoplasm. It catalyses the reaction 2-formamido-N(1)-(5-O-phospho-beta-D-ribosyl)acetamidine + ATP = 5-amino-1-(5-phospho-beta-D-ribosyl)imidazole + ADP + phosphate + H(+). It functions in the pathway purine metabolism; IMP biosynthesis via de novo pathway; 5-amino-1-(5-phospho-D-ribosyl)imidazole from N(2)-formyl-N(1)-(5-phospho-D-ribosyl)glycinamide: step 2/2. This Sinorhizobium fredii (strain NBRC 101917 / NGR234) protein is Phosphoribosylformylglycinamidine cyclo-ligase.